Reading from the N-terminus, the 176-residue chain is Ribosome maturation factor RimM (176 aa).

The PRC barrel domain maps to 93-172 (EGEFFYFDVL…EILTKDAKSI (80 aa)).

Belongs to the RimM family. In terms of assembly, binds ribosomal protein uS19.

It localises to the cytoplasm. An accessory protein needed during the final step in the assembly of 30S ribosomal subunit, possibly for assembly of the head region. Essential for efficient processing of 16S rRNA. May be needed both before and after RbfA during the maturation of 16S rRNA. It has affinity for free ribosomal 30S subunits but not for 70S ribosomes. This is Ribosome maturation factor RimM from Campylobacter curvus (strain 525.92).